The following is a 310-amino-acid chain: Tagatose-6-phosphate kinase (310 aa).

The protein belongs to the carbohydrate kinase PfkB family. LacC subfamily.

It catalyses the reaction D-tagatofuranose 6-phosphate + ATP = D-tagatofuranose 1,6-bisphosphate + ADP + H(+). It functions in the pathway carbohydrate metabolism; D-tagatose 6-phosphate degradation; D-glyceraldehyde 3-phosphate and glycerone phosphate from D-tagatose 6-phosphate: step 1/2. This is Tagatose-6-phosphate kinase from Staphylococcus epidermidis (strain ATCC 12228 / FDA PCI 1200).